Here is a 601-residue protein sequence, read N- to C-terminus: 66 kDa stress protein (601 aa).

WD repeat units follow at residues 56–95 (EHAQPATVAKYAPSGFYIASGDLSGTLRIWDTTQLEHPLK), 100–143 (VLSG…GEIT), 145–184 (HSKAIASCDFKATRPFRVITGAEDFQANWFEGPPFKFKHA), 187–226 (EHTRFLTCVRFSPDGEKVLTVGLDKKGFILDGKTGEKVGA), 233–272 (AHALGIYSCSWSPDSKKVLTVSADKSAKIWDDKGTLLTTF), 318–357 (GHNKLVTSLAFDTASKALYSGSYDGVILQWNLETGIAVPI), 435–478 (ASTT…LSEQ), 483–522 (GHRGFLTAIAYSPDGKHFASADQNRDIFVWDKASRKIKVE), 526–565 (YHNARVTSLAWNSNSNNIVTGSLDSHVYVWSVSEPSKHIA), and 569–600 (AHRGGVNAVLWVDEHTVASAGLDCSIKTWTIK).

It belongs to the WD repeat AIP1 family.

In terms of biological role, associated with the process of cyst formation. In Physarum polycephalum (Slime mold), this protein is 66 kDa stress protein.